The primary structure comprises 148 residues: Large ribosomal subunit protein uL15 (148 aa).

Residues Met1–Val47 are disordered. A compositionally biased stretch (basic residues) spans Thr31–Gly45.

This sequence belongs to the universal ribosomal protein uL15 family. In terms of assembly, part of the 50S ribosomal subunit.

Its function is as follows. Binds to the 23S rRNA. In Pseudothermotoga lettingae (strain ATCC BAA-301 / DSM 14385 / NBRC 107922 / TMO) (Thermotoga lettingae), this protein is Large ribosomal subunit protein uL15.